Consider the following 248-residue polypeptide: Proteasome subunit alpha type-1 (248 aa).

It belongs to the peptidase T1A family. As to quaternary structure, the 26S proteasome consists of a 20S proteasome core and two 19S regulatory subunits. The 20S proteasome core is composed of 28 subunits that are arranged in four stacked rings, resulting in a barrel-shaped structure. The two end rings are each formed by seven alpha subunits, and the two central rings are each formed by seven beta subunits. The catalytic chamber with the active sites is on the inside of the barrel.

The protein localises to the cytoplasm. The protein resides in the nucleus. Its function is as follows. The proteasome is a multicatalytic proteinase complex which is characterized by its ability to cleave peptides with Arg, Phe, Tyr, Leu, and Glu adjacent to the leaving group at neutral or slightly basic pH. The proteasome has an ATP-dependent proteolytic activity. The sequence is that of Proteasome subunit alpha type-1 (psmA1) from Dictyostelium discoideum (Social amoeba).